A 1210-amino-acid chain; its full sequence is Ice nucleation protein (1210 aa).

Residues 165–1156 form an octapeptide periodicity region; that stretch reads AVYGSTLTGA…LSGGENSTLI (992 aa).

Belongs to the bacterial ice nucleation protein family.

The protein resides in the cell outer membrane. Its function is as follows. Ice nucleation proteins enable bacteria to nucleate crystallization in supercooled water. The protein is Ice nucleation protein (inaW) of Pseudomonas fluorescens.